The primary structure comprises 222 residues: Uracil-DNA glycosylase (222 aa).

The active-site Proton acceptor is Asp-66.

This sequence belongs to the uracil-DNA glycosylase (UDG) superfamily. UNG family.

The protein localises to the cytoplasm. It carries out the reaction Hydrolyzes single-stranded DNA or mismatched double-stranded DNA and polynucleotides, releasing free uracil.. Its function is as follows. Excises uracil residues from the DNA which can arise as a result of misincorporation of dUMP residues by DNA polymerase or due to deamination of cytosine. In Porphyromonas gingivalis (strain ATCC 33277 / DSM 20709 / CIP 103683 / JCM 12257 / NCTC 11834 / 2561), this protein is Uracil-DNA glycosylase.